The chain runs to 192 residues: Orotate phosphoribosyltransferase (192 aa).

116 to 124 (EDIVTTGLS) contacts 5-phospho-alpha-D-ribose 1-diphosphate. Orotate contacts are provided by Thr-120 and Arg-148.

Belongs to the purine/pyrimidine phosphoribosyltransferase family. PyrE subfamily. Homodimer. Mg(2+) is required as a cofactor.

The catalysed reaction is orotidine 5'-phosphate + diphosphate = orotate + 5-phospho-alpha-D-ribose 1-diphosphate. It functions in the pathway pyrimidine metabolism; UMP biosynthesis via de novo pathway; UMP from orotate: step 1/2. In terms of biological role, catalyzes the transfer of a ribosyl phosphate group from 5-phosphoribose 1-diphosphate to orotate, leading to the formation of orotidine monophosphate (OMP). This Brucella abortus (strain S19) protein is Orotate phosphoribosyltransferase.